The primary structure comprises 323 residues: 4-hydroxythreonine-4-phosphate dehydrogenase (323 aa).

Substrate is bound at residue threonine 133. Histidine 161, histidine 206, and histidine 261 together coordinate a divalent metal cation. Substrate contacts are provided by lysine 269, asparagine 278, and arginine 287.

Belongs to the PdxA family. Homodimer. The cofactor is Zn(2+). Mg(2+) serves as cofactor. Requires Co(2+) as cofactor.

It localises to the cytoplasm. It carries out the reaction 4-(phosphooxy)-L-threonine + NAD(+) = 3-amino-2-oxopropyl phosphate + CO2 + NADH. Its pathway is cofactor biosynthesis; pyridoxine 5'-phosphate biosynthesis; pyridoxine 5'-phosphate from D-erythrose 4-phosphate: step 4/5. Its function is as follows. Catalyzes the NAD(P)-dependent oxidation of 4-(phosphooxy)-L-threonine (HTP) into 2-amino-3-oxo-4-(phosphooxy)butyric acid which spontaneously decarboxylates to form 3-amino-2-oxopropyl phosphate (AHAP). This chain is 4-hydroxythreonine-4-phosphate dehydrogenase, found in Xanthomonas axonopodis pv. citri (strain 306).